The chain runs to 213 residues: Thiopurine S-methyltransferase (213 aa).

Residues tryptophan 10, leucine 45, glutamate 66, and arginine 121 each coordinate S-adenosyl-L-methionine.

Belongs to the class I-like SAM-binding methyltransferase superfamily. TPMT family.

The protein resides in the cytoplasm. The catalysed reaction is S-adenosyl-L-methionine + a thiopurine = S-adenosyl-L-homocysteine + a thiopurine S-methylether.. This Aliivibrio fischeri (strain MJ11) (Vibrio fischeri) protein is Thiopurine S-methyltransferase.